A 124-amino-acid chain; its full sequence is Small ribosomal subunit protein uS12 (124 aa).

Asp-89 bears the 3-methylthioaspartic acid mark.

The protein belongs to the universal ribosomal protein uS12 family. As to quaternary structure, part of the 30S ribosomal subunit. Contacts proteins S8 and S17. May interact with IF1 in the 30S initiation complex.

With S4 and S5 plays an important role in translational accuracy. In terms of biological role, interacts with and stabilizes bases of the 16S rRNA that are involved in tRNA selection in the A site and with the mRNA backbone. Located at the interface of the 30S and 50S subunits, it traverses the body of the 30S subunit contacting proteins on the other side and probably holding the rRNA structure together. The combined cluster of proteins S8, S12 and S17 appears to hold together the shoulder and platform of the 30S subunit. This is Small ribosomal subunit protein uS12 from Nitratiruptor sp. (strain SB155-2).